Consider the following 358-residue polypeptide: Protein RecA (358 aa).

ATP is bound at residue Gly-69–Thr-76.

The protein belongs to the RecA family.

It is found in the cytoplasm. Its function is as follows. Can catalyze the hydrolysis of ATP in the presence of single-stranded DNA, the ATP-dependent uptake of single-stranded DNA by duplex DNA, and the ATP-dependent hybridization of homologous single-stranded DNAs. It interacts with LexA causing its activation and leading to its autocatalytic cleavage. The polypeptide is Protein RecA (Trichormus variabilis (strain ATCC 29413 / PCC 7937) (Anabaena variabilis)).